We begin with the raw amino-acid sequence, 173 residues long: Histone deacetylase complex subunit SAP30 homolog (173 aa).

An Atypical zinc finger spans residues 21–69 (CCLLDDGDRCRNQAGNASYSKRIQKTVTQRRLKLSIDTAARHIYICDFH).

The protein belongs to the SAP30 family. In terms of assembly, component of the class 1 Sin3-histone deacetylase complex (HDAC).

It is found in the nucleus. Its function is as follows. Required for the function of the class 1 Sin3-histone deacetylase complex (HDAC). The protein is Histone deacetylase complex subunit SAP30 homolog of Aedes aegypti (Yellowfever mosquito).